Reading from the N-terminus, the 287-residue chain is 3-methyl-2-oxobutanoate hydroxymethyltransferase (287 aa).

The Mg(2+) site is built by Asp67 and Asp106. Residues 67-68, Asp106, and Lys136 each bind 3-methyl-2-oxobutanoate; that span reads DS. Glu138 contributes to the Mg(2+) binding site. Glu204 functions as the Proton acceptor in the catalytic mechanism.

Belongs to the PanB family. Homodecamer; pentamer of dimers. Mg(2+) serves as cofactor.

Its subcellular location is the cytoplasm. The enzyme catalyses 3-methyl-2-oxobutanoate + (6R)-5,10-methylene-5,6,7,8-tetrahydrofolate + H2O = 2-dehydropantoate + (6S)-5,6,7,8-tetrahydrofolate. Its pathway is cofactor biosynthesis; (R)-pantothenate biosynthesis; (R)-pantoate from 3-methyl-2-oxobutanoate: step 1/2. Its function is as follows. Catalyzes the reversible reaction in which hydroxymethyl group from 5,10-methylenetetrahydrofolate is transferred onto alpha-ketoisovalerate to form ketopantoate. The chain is 3-methyl-2-oxobutanoate hydroxymethyltransferase from Streptomyces avermitilis (strain ATCC 31267 / DSM 46492 / JCM 5070 / NBRC 14893 / NCIMB 12804 / NRRL 8165 / MA-4680).